The chain runs to 568 residues: Peroxisomal leader peptide-processing protease (568 aa).

Positions 332 to 568 are serine protease; it reads TPRGLPLRDL…PLSEVPRSKL (237 aa). Catalysis depends on charge relay system residues histidine 374, aspartate 410, and serine 483.

It belongs to the peptidase S1B family. In terms of assembly, homodimer. Forms a heterodimer with the C-terminal cleavage product (49 kDa form). Forms a heterodimer with the N-terminal cleavage product (10 kDa form). Interacts with PEX5. Interacts with LONP2. In terms of processing, self-cleavage gives rise to an N-terminal 10-kDa fragment and C-terminal 49-kDa fragment upon import into the peroxisomes. The full-lengh TYSND1 is the active the proteolytic processing of PTS1- and PTS2-proteins and in self-cleavage, and intermolecular self-cleavage of TYSND1 down-regulates its protease activity.

Its subcellular location is the peroxisome. Inhibited by N-ethylmaleimide (NEM). Not affected by leupeptin or trans-epoxysuccinyl-l-leucylamido-(4-gianidino) butane (E64). Functionally, peroxisomal protease that mediates both the removal of the leader peptide from proteins containing a PTS2 target sequence and processes several PTS1-containing proteins. Catalyzes the processing of PTS1-proteins involved in the peroxisomal beta-oxidation of fatty acids. This Mus musculus (Mouse) protein is Peroxisomal leader peptide-processing protease (Tysnd1).